Reading from the N-terminus, the 511-residue chain is Coatomer subunit delta (511 aa).

Basic and acidic residues predominate over residues 168-177 (QARRDAERQG). The interval 168 to 188 (QARRDAERQGKKAPGFGGFGS) is disordered. S223 carries the post-translational modification Phosphoserine. N6-acetyllysine is present on residues K233 and K241. A Phosphoserine modification is found at S244. An MHD domain is found at 271–511 (MESVHMKIEE…TFLVDKYEIL (241 aa)). N6-acetyllysine occurs at positions 309 and 351. S493 carries the phosphoserine modification.

This sequence belongs to the adaptor complexes medium subunit family. Delta-COP subfamily. Oligomeric complex that consists of at least the alpha, beta, beta', gamma, delta, epsilon and zeta subunits.

The protein resides in the cytoplasm. It is found in the golgi apparatus membrane. It localises to the cytoplasmic vesicle. The protein localises to the COPI-coated vesicle membrane. Functionally, the coatomer is a cytosolic protein complex that binds to dilysine motifs and reversibly associates with Golgi non-clathrin-coated vesicles, which further mediate biosynthetic protein transport from the ER, via the Golgi up to the trans Golgi network. Coatomer complex is required for budding from Golgi membranes, and is essential for the retrograde Golgi-to-ER transport of dilysine-tagged proteins. In mammals, the coatomer can only be recruited by membranes associated to ADP-ribosylation factors (ARFs), which are small GTP-binding proteins; the complex also influences the Golgi structural integrity, as well as the processing, activity, and endocytic recycling of LDL receptors. The protein is Coatomer subunit delta (Arcn1) of Mus musculus (Mouse).